The sequence spans 233 residues: MDTGVTSPRVLVVDDDSDVLASLERGLRLSGFEVATAVDGAEALRSATENRPDAIVLDINMPVLDGVSVVTALRAMDNDVPVCVLSARSSVDDRVAGLEAGADDYLVKPFVLAELVARVKALLRRRGSTATSSSETITVGPLEVDIPGRRARVNGVDVDLTKREFDLLAVLAEHKTAVLSRAQLLELVWGYDFAADTNVVDVFIGYLRRKLEAGGGPRLLHTVRGVGFVLRMQ.

Residues 9–123 enclose the Response regulatory domain; sequence RVLVVDDDSD…ELVARVKALL (115 aa). A 4-aspartylphosphate modification is found at Asp-58. A DNA-binding region (ompR/PhoB-type) is located at residues 134-232; the sequence is SETITVGPLE…VRGVGFVLRM (99 aa).

Post-translationally, phosphorylated by PrrB at Asp-58.

It is found in the cytoplasm. Member of the two-component regulatory system PrrB/PrrA that is involved specifically in early intracellular multiplication of Mycobacterium and is essential for its viability. Upon phosphorylation by PrrB, functions as a transcription regulator by direct binding to promoter regions of target genes to positively regulate their expression. Autoregulates its own expression. This chain is Transcriptional regulatory protein PrrA (prrA), found in Mycobacterium bovis (strain ATCC BAA-935 / AF2122/97).